The following is a 429-amino-acid chain: 3-phosphoshikimate 1-carboxyvinyltransferase (429 aa).

The 3-phosphoshikimate site is built by Lys-21, Ser-22, and Arg-26. Phosphoenolpyruvate is bound at residue Lys-21. Positions 94 and 122 each coordinate phosphoenolpyruvate. 3-phosphoshikimate contacts are provided by Ser-167, Gln-169, Asp-315, and Lys-342. Gln-169 contacts phosphoenolpyruvate. Asp-315 serves as the catalytic Proton acceptor. Phosphoenolpyruvate contacts are provided by Arg-346 and Arg-388.

It belongs to the EPSP synthase family. Monomer.

It localises to the cytoplasm. The enzyme catalyses 3-phosphoshikimate + phosphoenolpyruvate = 5-O-(1-carboxyvinyl)-3-phosphoshikimate + phosphate. It participates in metabolic intermediate biosynthesis; chorismate biosynthesis; chorismate from D-erythrose 4-phosphate and phosphoenolpyruvate: step 6/7. Catalyzes the transfer of the enolpyruvyl moiety of phosphoenolpyruvate (PEP) to the 5-hydroxyl of shikimate-3-phosphate (S3P) to produce enolpyruvyl shikimate-3-phosphate and inorganic phosphate. This is 3-phosphoshikimate 1-carboxyvinyltransferase from Desulforamulus reducens (strain ATCC BAA-1160 / DSM 100696 / MI-1) (Desulfotomaculum reducens).